The following is a 166-amino-acid chain: RNA pyrophosphohydrolase (166 aa).

The region spanning 8-158 (PYRSCVGMML…KRPVYERVVK (151 aa)) is the Nudix hydrolase domain. A Nudix box motif is present at residues 47–68 (GGIDPGEDYWEAAQRELLEETN).

It belongs to the Nudix hydrolase family. RppH subfamily. The cofactor is a divalent metal cation.

In terms of biological role, accelerates the degradation of transcripts by removing pyrophosphate from the 5'-end of triphosphorylated RNA, leading to a more labile monophosphorylated state that can stimulate subsequent ribonuclease cleavage. In Afipia carboxidovorans (strain ATCC 49405 / DSM 1227 / KCTC 32145 / OM5) (Oligotropha carboxidovorans), this protein is RNA pyrophosphohydrolase.